Reading from the N-terminus, the 301-residue chain is Diaminopimelate epimerase (301 aa).

Positions 15, 47, and 67 each coordinate substrate. The active-site Proton donor is the Cys-76. Residues 77–78 (GN), Asn-163, Asn-197, and 215–216 (ER) contribute to the substrate site. Catalysis depends on Cys-224, which acts as the Proton acceptor. 225–226 (GS) contacts substrate.

Belongs to the diaminopimelate epimerase family. Homodimer.

Its subcellular location is the cytoplasm. It carries out the reaction (2S,6S)-2,6-diaminopimelate = meso-2,6-diaminopimelate. It participates in amino-acid biosynthesis; L-lysine biosynthesis via DAP pathway; DL-2,6-diaminopimelate from LL-2,6-diaminopimelate: step 1/1. Catalyzes the stereoinversion of LL-2,6-diaminopimelate (L,L-DAP) to meso-diaminopimelate (meso-DAP), a precursor of L-lysine and an essential component of the bacterial peptidoglycan. The sequence is that of Diaminopimelate epimerase from Rhizobium etli (strain ATCC 51251 / DSM 11541 / JCM 21823 / NBRC 15573 / CFN 42).